Reading from the N-terminus, the 169-residue chain is MIKKTLLVIALTFTVTTAFAHSMDHSKMDHGAMPMDHSQMMGMEGMSDVGMPAPGAKANKVVHVILSDDMKITFKKDVTIEPNDVVQFVVMNTGKIDHEFSIGSAVEQLKHREMMRQMGNHEHDSGSTVTVKPGKTKELLWHFQGDNKVEFACNIPGHAEAGMVKSIEL.

Residues 1 to 20 form the signal peptide; sequence MIKKTLLVIALTFTVTTAFA. 4 residues coordinate Cu(2+): His-98, Cys-153, His-158, and Met-163.

Belongs to the CopI family.

It is found in the periplasm. Involved in copper tolerance. Mediates copper tolerance in aerobiosis. May also mediate tolerance under anaerobiosis. Not required for virulence or colonization in the mouse model. In Vibrio cholerae serotype O1 (strain ATCC 39315 / El Tor Inaba N16961), this protein is Copper-resistant cuproprotein CopI.